Reading from the N-terminus, the 482-residue chain is Complement C1r subcomponent-like protein (482 aa).

Residues 1-43 (MSGFRGLVPELENSLWSSPTTSCMSKMCWWLLWGILHTCPTQA) form the signal peptide. The 123-residue stretch at 44 to 166 (SVLLAQQSPQ…KGFLALYQAV (123 aa)) folds into the CUB domain. 2 disulfide bridges follow: cysteine 97–cysteine 115 and cysteine 190–cysteine 223. The 60-residue stretch at 166–225 (VAVNQPNGDTEAVTTPGAPKIQNHCQDPYYKADQTGTLSCPSSWKWKDRQDGGEVPECVP) folds into the Sushi domain. Residues 240–479 (TFGSSRAKLG…YMDWIKRVIE (240 aa)) enclose the Peptidase S1 domain. Residues histidine 278 and aspartate 334 each act as charge relay system in the active site. A glycan (N-linked (GlcNAc...) asparagine) is linked at asparagine 358. 2 disulfide bridges follow: cysteine 397–cysteine 416 and cysteine 427–cysteine 457. The active-site Charge relay system is serine 431.

The protein belongs to the peptidase S1 family. Expressed in liver (at protein level).

The protein localises to the secreted. Its function is as follows. Mediates the proteolytic cleavage of HP/haptoglobin in the endoplasmic reticulum. This Mus musculus (Mouse) protein is Complement C1r subcomponent-like protein (C1rl).